Here is a 509-residue protein sequence, read N- to C-terminus: Acetyl-coenzyme A carboxylase carboxyl transferase subunit beta, chloroplastic (509 aa).

Residues 164–216 are disordered; that stretch reads HGSVCDGESHNSSEGESSSRRTHTKGVDLTIRESSNENERESSNENERKSSND. Basic and acidic residues-rich tracts occupy residues 170–182 and 193–216; these read GESH…ESSS and TIRE…SSND. The CoA carboxyltransferase N-terminal domain maps to 226-509; it reads LWLQCENCYG…LNQNSNQVEC (284 aa). Zn(2+) contacts are provided by Cys230, Cys233, Cys249, and Cys252. A C4-type zinc finger spans residues 230 to 252; sequence CENCYGLNYKKFLKSKMNICEQC. The interval 288–307 is disordered; sequence FDSEGEQEQEQEQEQEEEET.

The protein belongs to the AccD/PCCB family. In terms of assembly, acetyl-CoA carboxylase is a heterohexamer composed of biotin carboxyl carrier protein, biotin carboxylase and 2 subunits each of ACCase subunit alpha and ACCase plastid-coded subunit beta (accD). The cofactor is Zn(2+).

The protein resides in the plastid. It is found in the chloroplast stroma. The catalysed reaction is N(6)-carboxybiotinyl-L-lysyl-[protein] + acetyl-CoA = N(6)-biotinyl-L-lysyl-[protein] + malonyl-CoA. It functions in the pathway lipid metabolism; malonyl-CoA biosynthesis; malonyl-CoA from acetyl-CoA: step 1/1. Component of the acetyl coenzyme A carboxylase (ACC) complex. Biotin carboxylase (BC) catalyzes the carboxylation of biotin on its carrier protein (BCCP) and then the CO(2) group is transferred by the transcarboxylase to acetyl-CoA to form malonyl-CoA. This chain is Acetyl-coenzyme A carboxylase carboxyl transferase subunit beta, chloroplastic, found in Ipomoea purpurea (Common morning glory).